A 779-amino-acid chain; its full sequence is Membrane metallo-endopeptidase-like 1 (779 aa).

Topologically, residues 1-27 (MGKSEGPVGMVESAGRAGQKRPGFLEG) are cytoplasmic. The helical; Signal-anchor for type II membrane protein transmembrane segment at 28–48 (GLLLLLLLVTAALVALGVLYA) threads the bilayer. The Lumenal segment spans residues 49 to 779 (DRRGKQLPRL…MHPKERCRVW (731 aa)). Residues 88–779 (VCTTPGCVIA…MHPKERCRVW (692 aa)) form the Peptidase M13 domain. Cystine bridges form between Cys89–Cys94, Cys112–Cys764, Cys120–Cys724, Cys175–Cys439, and Cys650–Cys776. An a peptide-binding site is contributed by Arg135. Asn177, Asn207, Asn350, and Asn530 each carry an N-linked (GlcNAc...) asparagine glycan. Residues 515–560 (LEEMNRRLDEEYSNLNFSEDLYFENSLQNLKVGAQRSLRKLREKVD) adopt a coiled-coil conformation. A Zn(2+)-binding site is contributed by His613. Glu614 is an active-site residue. His617 is a Zn(2+) binding site. A glycan (N-linked (GlcNAc...) asparagine) is linked at Asn657. Glu676 is a Zn(2+) binding site. Residue Asp680 is the Proton donor of the active site.

This sequence belongs to the peptidase M13 family. It depends on Zn(2+) as a cofactor. N-glycosylated. As to expression, predominantly expressed in testis. Weakly expressed in brain, kidney and heart.

The protein localises to the membrane. Its subcellular location is the secreted. It carries out the reaction Preferential cleavage of polypeptides between hydrophobic residues, particularly with Phe or Tyr at P1'.. Inhibited by thiorphan and phosphoramidon. In terms of biological role, metalloprotease involved in sperm function, possibly by modulating the processes of fertilization and early embryonic development. Degrades a broad variety of small peptides with a preference for peptides shorter than 3 kDa containing neutral bulky aliphatic or aromatic amino acid residues. Shares the same substrate specificity with MME and cleaves peptides at the same amide bond. In Homo sapiens (Human), this protein is Membrane metallo-endopeptidase-like 1 (MMEL1).